The primary structure comprises 116 residues: Cocaine- and amphetamine-regulated transcript protein (116 aa).

A signal peptide spans 1–27; sequence MESPRLRLLPLLGAALLLLLPLLGALA. Y41 is modified (phosphotyrosine). At S48 the chain carries Phosphoserine. 3 disulfide bridges follow: C82/C100, C88/C108, and C102/C115.

The protein belongs to the CART family.

It is found in the secreted. Its function is as follows. Satiety factor closely associated with the actions of leptin and neuropeptide y; this anorectic peptide inhibits both normal and starvation-induced feeding and completely blocks the feeding response induced by neuropeptide Y and regulated by leptin in the hypothalamus. The protein is Cocaine- and amphetamine-regulated transcript protein (CARTPT) of Bos taurus (Bovine).